The following is a 170-amino-acid chain: ATP synthase subunit b (170 aa).

Residues 3–23 (IKILFFLALPFLAYASEHGGT) form a helical membrane-spanning segment.

The protein belongs to the ATPase B chain family. F-type ATPases have 2 components, F(1) - the catalytic core - and F(0) - the membrane proton channel. F(1) has five subunits: alpha(3), beta(3), gamma(1), delta(1), epsilon(1). F(0) has three main subunits: a(1), b(2) and c(10-14). The alpha and beta chains form an alternating ring which encloses part of the gamma chain. F(1) is attached to F(0) by a central stalk formed by the gamma and epsilon chains, while a peripheral stalk is formed by the delta and b chains.

It is found in the cell inner membrane. In terms of biological role, f(1)F(0) ATP synthase produces ATP from ADP in the presence of a proton or sodium gradient. F-type ATPases consist of two structural domains, F(1) containing the extramembraneous catalytic core and F(0) containing the membrane proton channel, linked together by a central stalk and a peripheral stalk. During catalysis, ATP synthesis in the catalytic domain of F(1) is coupled via a rotary mechanism of the central stalk subunits to proton translocation. Component of the F(0) channel, it forms part of the peripheral stalk, linking F(1) to F(0). In Campylobacter concisus (strain 13826), this protein is ATP synthase subunit b.